A 245-amino-acid polypeptide reads, in one-letter code: Probable histone chaperone asf-1-like protein (245 aa).

Residues 157-166 (EDPVAEPVDE) show a composition bias toward acidic residues. Residues 157–245 (EDPVAEPVDE…SGDVEMGDKH (89 aa)) are disordered. Over residues 167-183 (EANKVFDEDDLMPLHDD) the composition is skewed to basic and acidic residues. A compositionally biased stretch (acidic residues) spans 184 to 206 (GQDDDEEEEDDDETGPNTEEVDL). A compositionally biased stretch (basic and acidic residues) spans 215–245 (ANAHDGTEQKNGEESMEHDGASGDVEMGDKH).

It belongs to the ASF1 family. Interacts with histone H3 and histone H4.

Its subcellular location is the nucleus. Histone chaperone that facilitates histone deposition and histone exchange and removal during nucleosome assembly and disassembly. The chain is Probable histone chaperone asf-1-like protein (asfl-1) from Caenorhabditis elegans.